Consider the following 201-residue polypeptide: Pyridoxine/pyridoxamine 5'-phosphate oxidase (201 aa).

FMN is bound by residues 49-54 (RMVLLK), 64-65 (YT), Lys-71, and Gln-93. Lys-54 is a binding site for substrate. Substrate contacts are provided by Tyr-111, Arg-115, and Ser-119. Residues 128 to 129 (QS) and Trp-172 contribute to the FMN site. Residue 178-180 (RLH) coordinates substrate. Arg-182 is an FMN binding site.

This sequence belongs to the pyridoxamine 5'-phosphate oxidase family. Homodimer. The cofactor is FMN.

It catalyses the reaction pyridoxamine 5'-phosphate + O2 + H2O = pyridoxal 5'-phosphate + H2O2 + NH4(+). The catalysed reaction is pyridoxine 5'-phosphate + O2 = pyridoxal 5'-phosphate + H2O2. It participates in cofactor metabolism; pyridoxal 5'-phosphate salvage; pyridoxal 5'-phosphate from pyridoxamine 5'-phosphate: step 1/1. Its pathway is cofactor metabolism; pyridoxal 5'-phosphate salvage; pyridoxal 5'-phosphate from pyridoxine 5'-phosphate: step 1/1. In terms of biological role, catalyzes the oxidation of either pyridoxine 5'-phosphate (PNP) or pyridoxamine 5'-phosphate (PMP) into pyridoxal 5'-phosphate (PLP). The polypeptide is Pyridoxine/pyridoxamine 5'-phosphate oxidase (Ruegeria sp. (strain TM1040) (Silicibacter sp.)).